The primary structure comprises 430 residues: Glutamate-1-semialdehyde 2,1-aminomutase (430 aa).

Lys267 carries the N6-(pyridoxal phosphate)lysine modification.

Belongs to the class-III pyridoxal-phosphate-dependent aminotransferase family. HemL subfamily. As to quaternary structure, homodimer. It depends on pyridoxal 5'-phosphate as a cofactor.

The protein localises to the cytoplasm. The catalysed reaction is (S)-4-amino-5-oxopentanoate = 5-aminolevulinate. The protein operates within porphyrin-containing compound metabolism; protoporphyrin-IX biosynthesis; 5-aminolevulinate from L-glutamyl-tRNA(Glu): step 2/2. This Lawsonia intracellularis (strain PHE/MN1-00) protein is Glutamate-1-semialdehyde 2,1-aminomutase.